We begin with the raw amino-acid sequence, 993 residues long: Testis-expressed protein 13C (993 aa).

Disordered regions lie at residues 281-381 (QEET…SLKK), 520-547 (DSKSHRMKKDPVMPQKMVPLGDSRSHSL), and 894-959 (FSKS…PVNW). Polar residues predominate over residues 325–335 (GMTSQGDSSSH). Positions 353 to 364 (SRSHSLEKKPVM) are enriched in basic and acidic residues. Polar residues predominate over residues 944-957 (ESQQQKPASCSSPV). The RanBP2-type zinc-finger motif lies at 955–984 (SPVNWACPWCNAMNFPRNKVCSKCKRVRMP).

Belongs to the TEX13 family.

The sequence is that of Testis-expressed protein 13C from Homo sapiens (Human).